A 345-amino-acid polypeptide reads, in one-letter code: DNA N(6)-methyladenine demethylase ALKBH1A (345 aa).

Residues W179 and F186–W188 each bind substrate. The 121-residue stretch at R225–F345 folds into the Fe2OG dioxygenase domain. N232 to F234 provides a ligand contact to 2-oxoglutarate. Fe cation-binding residues include H243, D245, and H299. R336–R342 serves as a coordination point for 2-oxoglutarate.

The protein belongs to the alkB family. Fe(2+) is required as a cofactor. In terms of tissue distribution, mostly expressed in siliques, to a lower extent in roots, seedlings and rosette leaves, but barely in cauline leaves, stems and flowers.

Its subcellular location is the nucleus. The protein resides in the cytoplasm. The enzyme catalyses an N(6)-methyl-2'-deoxyadenosine in DNA + 2-oxoglutarate + O2 = a 2'-deoxyadenosine in DNA + formaldehyde + succinate + CO2. Functionally, dioxygenase that catalyzes DNA N(6)-methyladenine (6 mA) demethylation to modulate gene expression and regulate seed germination. In Arabidopsis thaliana (Mouse-ear cress), this protein is DNA N(6)-methyladenine demethylase ALKBH1A.